A 476-amino-acid polypeptide reads, in one-letter code: Ubiquinone biosynthesis monooxygenase COQ6, mitochondrial (476 aa).

A mitochondrion-targeting transit peptide spans 1 to 35 (MAARIGSMAGLLCVRWWSSAQLAARGGPLVASQRW). N6-succinyllysine is present on K219.

The protein belongs to the UbiH/COQ6 family. Component of a multi-subunit COQ enzyme complex, composed of at least COQ3, COQ4, COQ5, COQ6, COQ7 and COQ9. Interacts with COQ8B and COQ7. Requires FAD as cofactor. Expressed in the kidney, in podocytes.

Its subcellular location is the mitochondrion inner membrane. It is found in the golgi apparatus. The protein resides in the cell projection. It catalyses the reaction 4-hydroxy-3-(all-trans-decaprenyl)benzoate + 2 reduced [2Fe-2S]-[ferredoxin] + O2 + 2 H(+) = 3,4-dihydroxy-5-(all-trans-decaprenyl)benzoate + 2 oxidized [2Fe-2S]-[ferredoxin] + H2O. The enzyme catalyses 2-methoxy-6-(all-trans-decaprenyl)phenol + 2 reduced [2Fe-2S]-[ferredoxin] + O2 + 2 H(+) = 2-methoxy-6-(all-trans-decaprenyl)benzene-1,4-diol + 2 oxidized [2Fe-2S]-[ferredoxin] + H2O. Its pathway is cofactor biosynthesis; ubiquinone biosynthesis. In terms of biological role, FAD-dependent monooxygenase required for two non-consecutive steps during ubiquinone biosynthesis. Required for the C5-ring hydroxylation during ubiquinone biosynthesis by catalyzing the hydroxylation of 4-hydroxy-3-(all-trans-decaprenyl)benzoic acid to 3,4-dihydroxy-5-(all-trans-decaprenyl)benzoic acid. Also acts downstream of COQ4, for the C1-hydroxylation during ubiquinone biosynthesis by catalyzing the hydroxylation of 2-methoxy-6-(all-trans-decaprenyl)phenol to 2-methoxy-6-(all-trans-decaprenyl)benzene-1,4-diol. The electrons required for the hydroxylation reaction are funneled indirectly to COQ6 from NADPH via a ferredoxin/ferredoxin reductase system composed of FDX2 and FDXR. The protein is Ubiquinone biosynthesis monooxygenase COQ6, mitochondrial of Mus musculus (Mouse).